Here is a 249-residue protein sequence, read N- to C-terminus: Cyclic AMP-responsive element-binding protein (249 aa).

A KID domain is found at 35-94; sequence IQPNQHQLQHQLQTMHDGGIDGKRREILARRPSYRRILDDLAGDGPVKMENYDDTGSSGE. The interval 73 to 106 is disordered; that stretch reads DDLAGDGPVKMENYDDTGSSGESSPNGNNEEDIN. The segment covering 90–100 has biased composition (low complexity); the sequence is GSSGESSPNGN. Positions 191–249 constitute a bZIP domain; it reads TRKRELRLYKNREAARECRRKKKEYVKCLENRVAVLENQNKALIEELKSLKDLYCSKGD. The segment at 192–217 is basic motif; it reads RKRELRLYKNREAARECRRKKKEYVK. The tract at residues 219-240 is leucine-zipper; sequence LENRVAVLENQNKALIEELKSL.

This sequence belongs to the bZIP family. As to quaternary structure, binds DNA as a dimer.

The protein localises to the nucleus. In terms of biological role, this protein binds the cAMP response element (CRE), sequence present in many viral and cellular promoters. Could regulate the transcriptional activity of genes involved in regeneration processes. This chain is Cyclic AMP-responsive element-binding protein (CREB), found in Hydra viridissima (Green hydra).